The following is a 443-amino-acid chain: UPF0656 protein C926.02 (443 aa).

Belongs to the UPF0656 family.

Its subcellular location is the cytoplasm. It localises to the nucleus. The sequence is that of UPF0656 protein C926.02 from Schizosaccharomyces pombe (strain 972 / ATCC 24843) (Fission yeast).